Reading from the N-terminus, the 924-residue chain is 104 kDa microneme/rhoptry antigen (924 aa).

The signal sequence occupies residues 1–19; that stretch reads MKFLILLFNILCLFPVLAA. The disordered stretch occupies residues 490 to 907; sequence SKKKLAPITE…KKPKKPDSAY (418 aa). 2 stretches are compositionally biased toward basic and acidic residues: residues 522–532 and 573–588; these read PGDKEGSEGHK and GPKD…EPRK. Positions 592–617 are enriched in low complexity; the sequence is PRTASPTRRPSPKLPQLSKLPKSTSP. Basic and acidic residues predominate over residues 653 to 673; sequence SFKEKFYDDYSKAASRSKETK. Residues 724 to 736 show a composition bias toward low complexity; the sequence is SPSTSPSEFFTPP. 3 stretches are compositionally biased toward basic and acidic residues: residues 737–747, 770–783, and 816–825; these read ESKRTRFHETP, KSPD…RSPS, and DPGRMAKDAS. Residues 857–867 are compositionally biased toward acidic residues; that stretch reads DDEGTEADDEE. Residues 868–878 show a composition bias toward basic and acidic residues; sequence THPPEERQKTE. Residues 879-901 are compositionally biased toward basic residues; that stretch reads VRRRRPPKKPSKSPRPSKPKKPK. The GPI-anchor amidated aspartate moiety is linked to residue aspartate 904. The propeptide at 905–924 is removed in mature form; it reads SAYIPSILAILVVSLIVGIL.

It is found in the cell membrane. In Theileria parva (East coast fever infection agent), this protein is 104 kDa microneme/rhoptry antigen.